Reading from the N-terminus, the 859-residue chain is Photoactivated adenylate cyclase subunit beta (859 aa).

Positions 56-149 (LRRLMYLSKS…GRMYGDWHMK (94 aa)) constitute a BLUF 1 domain. Positions 205-333 (VVTFIYLVEF…DCINTTSRIA (129 aa)) constitute a Guanylate cyclase 1 domain. Residues 420 to 443 (RPPIFDDTPKGNPRPRTPGYGGRQ) form a disordered region. The BLUF 2 domain maps to 471 to 563 (LTTLTYISQA…RVYPSEWTLT (93 aa)). The region spanning 619 to 748 (VMLATDICSF…AVSARVMEVE (130 aa)) is the Guanylate cyclase 2 domain. Residues 813–859 (AARSGEKPLTEPEEAKPDFRVSPGRVRHGDSGRRSNSAQGKRSIQVR) are disordered. A compositionally biased stretch (basic and acidic residues) spans 815–831 (RSGEKPLTEPEEAKPDF). Residues 846-859 (RSNSAQGKRSIQVR) are compositionally biased toward polar residues.

It belongs to the adenylyl cyclase class-4/guanylyl cyclase family. Heterotetramer of two alpha and two beta subunits. FAD serves as cofactor.

Its subcellular location is the cell projection. It localises to the cilium. The protein resides in the flagellum. The catalysed reaction is ATP = 3',5'-cyclic AMP + diphosphate. Its activity is regulated as follows. Activity increased by up to 80-fold under blue light. Functionally, acts as a blue light photoreceptor for the step-up photophobic response. Mediates photoavoidance. This Euglena gracilis protein is Photoactivated adenylate cyclase subunit beta.